Reading from the N-terminus, the 332-residue chain is Autoinducer 2 import system permease protein LsrD (332 aa).

10 helical membrane passes run 7-27 (YSWEIALAALLIFEILAFGLI), 45-65 (ICIGIVALPLTMVIVSGGMDI), 70-90 (TIGLCAITLGVLFQLGMPLPL), 91-111 (AIIITLLLGAICGLINAGLII), 118-138 (LVITLGTMYLFGGSALLLSGM), 162-182 (FLGIPMPLIFFLVCCLFFWLL), 216-236 (VYAMTGCASAIAAVLLVSYFG), 240-260 (SDLGASFLMPAITAVVLGGAN), 261-281 (IYGGSGSIMGSALAALLVGFL), and 288-308 (AGVPNQISSALSGALLIVVVV).

The protein belongs to the binding-protein-dependent transport system permease family. AraH/RbsC subfamily. The complex is composed of two ATP-binding proteins (LsrA), two transmembrane proteins (LsrC and LsrD) and a solute-binding protein (LsrB).

Its subcellular location is the cell inner membrane. Part of the ABC transporter complex LsrABCD involved in autoinducer 2 (AI-2) import. Probably responsible for the translocation of the substrate across the membrane. This is Autoinducer 2 import system permease protein LsrD (lsrD) from Salmonella paratyphi B (strain ATCC BAA-1250 / SPB7).